The sequence spans 417 residues: Glucose-1-phosphatase (417 aa).

A signal peptide spans 1–23; it reads MKYKVLTLCLSAALFAPIAPTMA. Arg-41 serves as a coordination point for substrate. His-42 (nucleophile) is an active-site residue. Arg-45, Arg-118, and Glu-220 together coordinate substrate. Catalysis depends on Asp-315, which acts as the Proton donor.

Belongs to the histidine acid phosphatase family. In terms of assembly, homodimer.

It localises to the periplasm. The enzyme catalyses alpha-D-glucose 1-phosphate + H2O = D-glucose + phosphate. This chain is Glucose-1-phosphatase (agp), found in Providencia rettgeri.